We begin with the raw amino-acid sequence, 675 residues long: PTS system glucose-specific EIICBA component (675 aa).

Residues 3 to 414 (KKLFGQLQRI…FNFKTPGRED (412 aa)) enclose the PTS EIIC type-1 domain. 11 helical membrane-spanning segments follow: residues 16–36 (LMLP…GTAF), 59–79 (MMTG…ALGV), 81–101 (IGLA…FIIM), 126–146 (VLGI…GALA), 173–193 (IMMA…WPFI), 199–219 (AFST…FGFI), 273–293 (FMQG…LAIY), 303–323 (VVGG…ITEP), 328–348 (FLFV…LSFL), 355–375 (LHLG…GILP), and 378–398 (TPWW…YVVF). The PTS EIIB type-1 domain occupies 425 to 506 (SKLPFDVLDA…ARIMNGDITK (82 aa)). Catalysis depends on Cys-447, which acts as the Phosphocysteine intermediate; for EIIB activity. The 105-residue stretch at 547 to 651 (DKVFSEKMMG…SVVTPVIITN (105 aa)) folds into the PTS EIIA type-1 domain. His-599 acts as the Tele-phosphohistidine intermediate; for EIIA activity in catalysis.

The protein localises to the cell membrane. It catalyses the reaction N(pros)-phospho-L-histidyl-[protein] + D-glucose(out) = D-glucose 6-phosphate(in) + L-histidyl-[protein]. Its function is as follows. The phosphoenolpyruvate-dependent sugar phosphotransferase system (sugar PTS), a major carbohydrate active transport system, catalyzes the phosphorylation of incoming sugar substrates concomitantly with their translocation across the cell membrane. This system is involved in glucose transport. In Staphylococcus haemolyticus (strain JCSC1435), this protein is PTS system glucose-specific EIICBA component (ptsG).